A 162-amino-acid chain; its full sequence is UPF0114 protein PA4574 (162 aa).

A run of 3 helical transmembrane segments spans residues 10 to 32, 53 to 75, and 136 to 156; these read YASR…ALTI, LILV…MVMI, and LMWY…MGYL.

This sequence belongs to the UPF0114 family.

It localises to the cell membrane. In Pseudomonas aeruginosa (strain ATCC 15692 / DSM 22644 / CIP 104116 / JCM 14847 / LMG 12228 / 1C / PRS 101 / PAO1), this protein is UPF0114 protein PA4574.